Consider the following 187-residue polypeptide: Macro domain-containing protein MM_0177 (187 aa).

The region spanning 8 to 187 (VEEGIRMELN…SIKKALSKIL (180 aa)) is the Macro domain.

It belongs to the MacroD-type family.

This Methanosarcina mazei (strain ATCC BAA-159 / DSM 3647 / Goe1 / Go1 / JCM 11833 / OCM 88) (Methanosarcina frisia) protein is Macro domain-containing protein MM_0177.